The primary structure comprises 305 residues: Short-chain dehydrogenase/reductase VdtF (305 aa).

Residues Leu-28 and Asn-98 each contribute to the NADP(+) site. Ser-192 serves as the catalytic Proton donor. Tyr-206, Lys-210, and Thr-241 together coordinate NADP(+). The active-site Proton acceptor is the Tyr-206. The active-site Lowers pKa of active site Tyr is Lys-210.

Belongs to the short-chain dehydrogenases/reductases (SDR) family.

The catalysed reaction is methyl 2-[(3S)-9,10-dihydroxy-7-methoxy-1-oxo-1H,3H,4H-naphtho[2,3-c]pyran-3-yl]acetate + AH2 = semiviriditoxin + A. It carries out the reaction 9,10-dihydroxy-7-methoxy-3-(2-oxopropyl)-1H-benzo[g]isochromen-1-one + AH2 = (3S)-9,10-dihydroxy-7-methoxy-3-(2-oxopropyl)-1H,3H,4H-naphtho[2,3-c]pyran-1-one + A. The protein operates within secondary metabolite biosynthesis. Its function is as follows. Short-chain dehydrogenase/reductase; part of the gene cluster that mediates the biosynthesis of viriditoxin, one of the 'classical' secondary metabolites produced by fungi and that has antibacterial activity. The first step is performed by the polyketide synthase VdtA which condenses one acetyl-CoA and 6 malonyl-CoA units to form the heptaketide monomer backbone of viriditoxin. The product of VdtA is then O-methylated on C7 by the O-methyltransferase VdtC. The O-methyl group is important for the stereoselective coupling of the monomers at the final step of viriditoxin biosynthesis. The short-chain dehydrogenase/reductase VdtF then acts as a stereospecific reductase converting the pyrone to dihydropyrone via the reduction of the C3-C4 double bond. The FAD-binding monooxygenase VdtE then converts the ketone group into a methyl-ester group to yield semi-viriditoxin. Finally, the laccase VdtB is involved in dimerization of 2 semi-viriditoxin molecules to yield the final viriditoxin. VdtB is responsible for the regioselective 6,6'-coupling of semi-viriditoxin, which yields (M)-viriditoxin and (P)-viriditoxin at a ratio of 1:2. The non-catalytic carboxylesterase-like protein VdtD affects the stereochemistical outcome of the coupling. The highly reducing polyketide synthase VdtX is not involved in viriditoxin synthesis, but might possibly play a role in the production of additional metabolites not identified yet. This Byssochlamys spectabilis (Paecilomyces variotii) protein is Short-chain dehydrogenase/reductase VdtF.